Reading from the N-terminus, the 446-residue chain is Phosphoglucosamine mutase (446 aa).

The Phosphoserine intermediate role is filled by S102. The Mg(2+) site is built by S102, D241, D243, and D245. S102 carries the phosphoserine modification.

This sequence belongs to the phosphohexose mutase family. Mg(2+) serves as cofactor. Activated by phosphorylation.

The enzyme catalyses alpha-D-glucosamine 1-phosphate = D-glucosamine 6-phosphate. Its function is as follows. Catalyzes the conversion of glucosamine-6-phosphate to glucosamine-1-phosphate. This Xylella fastidiosa (strain M12) protein is Phosphoglucosamine mutase.